Reading from the N-terminus, the 156-residue chain is 6,7-dimethyl-8-ribityllumazine synthase (156 aa).

Residues phenylalanine 22, 57 to 59 (AYE), and 81 to 83 (TVI) each bind 5-amino-6-(D-ribitylamino)uracil. 86–87 (GT) contributes to the (2S)-2-hydroxy-3-oxobutyl phosphate binding site. Histidine 89 (proton donor) is an active-site residue. Position 114 (phenylalanine 114) interacts with 5-amino-6-(D-ribitylamino)uracil. Arginine 128 is a (2S)-2-hydroxy-3-oxobutyl phosphate binding site.

Belongs to the DMRL synthase family. Forms an icosahedral capsid composed of 60 subunits, arranged as a dodecamer of pentamers.

The enzyme catalyses (2S)-2-hydroxy-3-oxobutyl phosphate + 5-amino-6-(D-ribitylamino)uracil = 6,7-dimethyl-8-(1-D-ribityl)lumazine + phosphate + 2 H2O + H(+). It participates in cofactor biosynthesis; riboflavin biosynthesis; riboflavin from 2-hydroxy-3-oxobutyl phosphate and 5-amino-6-(D-ribitylamino)uracil: step 1/2. In terms of biological role, catalyzes the formation of 6,7-dimethyl-8-ribityllumazine by condensation of 5-amino-6-(D-ribitylamino)uracil with 3,4-dihydroxy-2-butanone 4-phosphate. This is the penultimate step in the biosynthesis of riboflavin. This Sodalis glossinidius (strain morsitans) protein is 6,7-dimethyl-8-ribityllumazine synthase.